A 926-amino-acid polypeptide reads, in one-letter code: Protein translocase subunit SecA (926 aa).

ATP contacts are provided by residues Gln-87, 105 to 109, and Asp-512; that span reads GEGKT. Zn(2+)-binding residues include Cys-911, Cys-913, Cys-922, and His-923.

The protein belongs to the SecA family. Monomer and homodimer. Part of the essential Sec protein translocation apparatus which comprises SecA, SecYEG and auxiliary proteins SecDF-YajC and YidC. It depends on Zn(2+) as a cofactor.

Its subcellular location is the cell inner membrane. It is found in the cytoplasm. The catalysed reaction is ATP + H2O + cellular proteinSide 1 = ADP + phosphate + cellular proteinSide 2.. Functionally, part of the Sec protein translocase complex. Interacts with the SecYEG preprotein conducting channel. Has a central role in coupling the hydrolysis of ATP to the transfer of proteins into and across the cell membrane, serving both as a receptor for the preprotein-SecB complex and as an ATP-driven molecular motor driving the stepwise translocation of polypeptide chains across the membrane. The protein is Protein translocase subunit SecA of Psychrobacter cryohalolentis (strain ATCC BAA-1226 / DSM 17306 / VKM B-2378 / K5).